We begin with the raw amino-acid sequence, 138 residues long: Small ribosomal subunit protein bS6 (138 aa).

Basic and acidic residues predominate over residues 97 to 121 (TEQSEMLKAEENRSERRERRDRPDN). A disordered region spans residues 97–138 (TEQSEMLKAEENRSERRERRDRPDNTDGSNENDSDSDNNADE). The span at 126–138 (NENDSDSDNNADE) shows a compositional bias: acidic residues.

The protein belongs to the bacterial ribosomal protein bS6 family.

In terms of biological role, binds together with bS18 to 16S ribosomal RNA. The sequence is that of Small ribosomal subunit protein bS6 from Stutzerimonas stutzeri (strain A1501) (Pseudomonas stutzeri).